The primary structure comprises 123 residues: Large ribosomal subunit protein uL14 (123 aa).

It belongs to the universal ribosomal protein uL14 family. As to quaternary structure, part of the 50S ribosomal subunit. Forms a cluster with proteins L3 and L19. In the 70S ribosome, L14 and L19 interact and together make contacts with the 16S rRNA in bridges B5 and B8.

Binds to 23S rRNA. Forms part of two intersubunit bridges in the 70S ribosome. The sequence is that of Large ribosomal subunit protein uL14 from Escherichia coli O139:H28 (strain E24377A / ETEC).